Here is a 346-residue protein sequence, read N- to C-terminus: Biotin synthase (346 aa).

The Radical SAM core domain maps to 38–256 (RQVQVSTLLS…IAVARIMMPT (219 aa)). [4Fe-4S] cluster is bound by residues cysteine 53, cysteine 57, and cysteine 60. [2Fe-2S] cluster-binding residues include cysteine 97, cysteine 128, cysteine 188, and arginine 260.

It belongs to the radical SAM superfamily. Biotin synthase family. In terms of assembly, homodimer. The cofactor is [4Fe-4S] cluster. It depends on [2Fe-2S] cluster as a cofactor.

It catalyses the reaction (4R,5S)-dethiobiotin + (sulfur carrier)-SH + 2 reduced [2Fe-2S]-[ferredoxin] + 2 S-adenosyl-L-methionine = (sulfur carrier)-H + biotin + 2 5'-deoxyadenosine + 2 L-methionine + 2 oxidized [2Fe-2S]-[ferredoxin]. Its pathway is cofactor biosynthesis; biotin biosynthesis; biotin from 7,8-diaminononanoate: step 2/2. Functionally, catalyzes the conversion of dethiobiotin (DTB) to biotin by the insertion of a sulfur atom into dethiobiotin via a radical-based mechanism. This Escherichia coli (strain K12 / DH10B) protein is Biotin synthase.